The chain runs to 1030 residues: MEIIKENNENDGENINNIPKKKSGSKRQLSFKKKWKASFKKNDFVNSHGINYNKSVGVGGNSGMPQRRNSIVAKPIGLTSYKINHNHNYQSQKLTWKYTSPTNSSLNLKNSDLKYLNNENKNISDNSNFDDGEEDDTDNKKNINNKNNNNNNPLTDIINIEEKIANTTTTTTNTTTINTETKNDIDTTISKLNNFYDNDETNNNIQNETDGNNNNSFSISNNLIIKEKNNNNNKNDNGDSDDDEDCKIIILDKPHIENLNDKNKQILSQPHTLTQPLTPTSNNTHKSTLFKKLELPPAPPSPPQPPVFQNLNNCDNIIQHQLENNCDAKNKSINIYNNEFDFKNNNNNIIENNENFEKNLNLLNNNNNFYHNNNLKKSKDNILKKSNNNINNINNININNNNNNNKKSKSKIKIFKKLLNNNIDRLNKNNMDNVLMKSQIIQINGAEIDDGNNYFNKNDQQHIEDNLMFLNETSQTNNATCEIDNLIDSIKINLSNGYFIAGQKVTGNLEISLNQDIKTSGLNLKWKVFEHVIINHYQSPQSPQKLNKKDKEKEKEKEKENDNDNENNNSESLIRDQSFELIDASSLKSFSNSSNCGSSLRNSQSINLNNYNFNNYKGGTLKKNSKIFNVLKNSSSITNFLKINPLTSSSSDFSLNSSSNYNLNLFNENRLIYKNQEKKTIYESGDSIFQTDDNGGIMNSGLHIIPFSFLLPSHLPSSFSDFTIDKETNEKILSAIIYKLSISFQDILYEEEDNDENNNNNFYNQHDDNEDNENIRNKKEYLKSLYELLKDYKIKKSFTVCEPSIIAAKVNEIPIRMEKKKSFLVNSGQISLKVALKRTIFFANEKIPINIKIENASSRSIDYILISIKKIQNISLSLIKKSKNNNEKQQQQIEKDNDEQQPNITDLTLSPSSSSFLSNSSNTSSSKNNNNNNNNLIFKKCTFKTSQRFNGVDAHCNFSDTILFDTNEIKGFNQTTNGTLIKCHYNIVIQCFVKRAFNVVCRIPILFGALPENNLTSIFNDEYQLNLLNM.

Disordered stretches follow at residues 1 to 27 (MEIIKENNENDGENINNIPKKKSGSKR) and 119 to 154 (ENKNISDNSNFDDGEEDDTDNKKNINNKNNNNNNPL). Over residues 128 to 137 (NFDDGEEDDT) the composition is skewed to acidic residues. A compositionally biased stretch (low complexity) spans 142 to 152 (NINNKNNNNNN). Coiled coils occupy residues 320–374 (HQLE…HNNN) and 544–577 (QKLNKKDKEKEKEKEKENDNDNENNNSESLIRDQ). Disordered regions lie at residues 539–572 (SPQSPQKLNKKDKEKEKEKEKENDNDNENNNSES) and 885–931 (NNEK…NNNN). Residues 547–562 (NKKDKEKEKEKEKEND) show a composition bias toward basic and acidic residues. Over residues 910–931 (SPSSSSFLSNSSNTSSSKNNNN) the composition is skewed to low complexity.

The protein belongs to the arrestin family.

In Dictyostelium discoideum (Social amoeba), this protein is Arrestin domain-containing protein F (adcF).